The sequence spans 635 residues: MDGSCDCIEPLWQADDLLVKYQYISDFFIALAYFSIPLELIYFVKKSAFFPYRWVLIQFGAFIVLCGATHLINLWTFAIYTKTIAVVLTVAKAATAVVSCITALMLVHIIPDLLNVKLRERFLKDKADELDREMGIIRTQEETGRHVHMLTHEIRSTLDRHTILRTTLVELGRTLALAECALWMPTRSGSALQLSHTIYNSAAIGSVVPINLPIVSKVFNSNRVVKIPHTSPLASITADKSRYVPPEVVAIRVPLLHLTNFQINDWPELSAKSFAVMVLMLPPDSAREWRPHERELVEVVADQVAVALSHAAILEESMRARDLLMEQNIALDAARREAEMAICARNDFLAVMNHEMRTPMRAIVSLSSLLLETNLSAEQRLMVETILKSSDLLATLTNDVLDVSKLENGSLELEIAPFNLHSTFTDVVNLIKPVAACKRLSVVVTLAPELPLHAIGDQKRLMQIILNVAGNSIKFTKEGHVSITASMARPDALRGPHEPDYHPVVSDGFFYLAVQVKDTGCGISPQDMPHTFRKFAHPENAGKWNSGSGLGLALSRRFVSLMEGNIWLESEGVGKGCTAMFFVKLGMPEKPNANLRRMAPHPLQPNQGAGGPDALSISIMDSNPRVPRVRYQSSV.

3 consecutive transmembrane segments (helical) span residues 24-44 (ISDF…IYFV), 59-79 (FGAF…TFAI), and 94-114 (ATAV…PDLL). Cys66 and His70 together coordinate Cu cation. One can recognise a GAF domain in the interval 159 to 308 (DRHTILRTTL…VVADQVAVAL (150 aa)). Residues 351 to 589 (VMNHEMRTPM…MFFVKLGMPE (239 aa)) enclose the Histidine kinase domain. His354 carries the phosphohistidine; by autocatalysis modification.

Belongs to the ethylene receptor family. Homodimer. Cu cation serves as cofactor. As to expression, expressed in anthers and hulls.

The protein localises to the endoplasmic reticulum membrane. The catalysed reaction is ATP + protein L-histidine = ADP + protein N-phospho-L-histidine.. Its function is as follows. Ethylene receptor related to bacterial two-component regulators. Acts as a negative regulator of ethylene signaling. May play a role in the regulation of flowering by up-regulating GI (GIGANTEA) and RCN1 and regulate starch accumulation by down-regulating the alpha-amylase AMY3D. The chain is Probable ethylene response sensor 2 from Oryza sativa subsp. indica (Rice).